A 292-amino-acid polypeptide reads, in one-letter code: Elongation factor Ts (292 aa).

Positions 82–85 are involved in Mg(2+) ion dislocation from EF-Tu; it reads TDFV.

It belongs to the EF-Ts family.

Its subcellular location is the cytoplasm. Its function is as follows. Associates with the EF-Tu.GDP complex and induces the exchange of GDP to GTP. It remains bound to the aminoacyl-tRNA.EF-Tu.GTP complex up to the GTP hydrolysis stage on the ribosome. The sequence is that of Elongation factor Ts from Bordetella petrii (strain ATCC BAA-461 / DSM 12804 / CCUG 43448).